Reading from the N-terminus, the 706-residue chain is Zinc transporter foi (706 aa).

The first 21 residues, 1–21 (MARHIMAVCVVCLLCAHRLHC), serve as a signal peptide directing secretion. The Extracellular portion of the chain corresponds to 22–261 (QDHIESLLGP…EKDKDIFYVW (240 aa)). Residues 40–56 (QDQLNARVYTNLSPSSE) are compositionally biased toward polar residues. Positions 40-101 (QDQLNARVYT…HGPTSESRVP (62 aa)) are disordered. Residues Asn-74, Asn-119, Asn-176, Asn-182, Asn-196, and Asn-207 are each glycosylated (N-linked (GlcNAc...) asparagine). Residues 262–282 (IYAFISVFACGILGLVGVAII) traverse the membrane as a helical segment. The Cytoplasmic segment spans residues 283–292 (PFMGSRYYKY). Residues 293-313 (IIQYLVALAVGTMTGDALLHL) traverse the membrane as a helical segment. The Extracellular segment spans residues 314 to 329 (LPHSLAGQDERGMIMK). Residues 330 to 350 (GLGCLGGIIFFYVMEHALTMI) form a helical membrane-spanning segment. The Cytoplasmic portion of the chain corresponds to 351-604 (SEWRKSVEKK…LIKAGMSVKS (254 aa)). Residues Ser-376, Ser-377, and Ser-381 each carry the phosphoserine modification. The helical transmembrane segment at 605-625 (AVYYNLLTGVLSFIGMIFGIA) threads the bilayer. The Extracellular segment spans residues 626-631 (FGQSQD). Residues 632–652 (VAQWMFAVAAGLFIYIALVDM) form a helical membrane-spanning segment. Residues 653-665 (MPEISASHKSLGQ) lie on the Cytoplasmic side of the membrane. A helical membrane pass occupies residues 666-686 (FLLQILGMLSGVGIMLLIALY). The Extracellular portion of the chain corresponds to 687-706 (EGDLMSAFGTAGAASHQHAH).

It belongs to the ZIP transporter (TC 2.A.5) family. Post-translationally, glycosylated. As to expression, maternal foi has almost completely disappeared by embryonic stage 3 except in the pole cells. In stage 6 embryos, expression is enriched in the invaginating mesoderm. In stage 9 embryos, high levels in the anterior and posterior midgut primordia. In stage 14 embryos, broad expression with low levels in the epidermis.

It is found in the cell membrane. Its function is as follows. Required for the normal migration of longitudinal and peripheral glial cells. During larval development, required for the migration of the subretinal glia into the eye disk. During embryonic development, also controls the migration of muscle cells toward their attachment sites. Required in the mesoderm for the correct morphogenesis of embryonic gonad and for tracheal branch fusion during tracheal development. Shg may be cooperating with foi to mediate a common mechanism for gonad and tracheal morphogenesis. Acts as a zinc transporter in both yeast and mammalian cells. The protein is Zinc transporter foi of Drosophila melanogaster (Fruit fly).